Consider the following 496-residue polypeptide: Probable CtpA-like serine protease (496 aa).

Residues 1-16 (MDDKQHTSSSDDERAE) are compositionally biased toward basic and acidic residues. The segment at 1–27 (MDDKQHTSSSDDERAEIATSNQDQQTN) is disordered. Over residues 18 to 27 (ATSNQDQQTN) the composition is skewed to polar residues. The helical transmembrane segment at 39-59 (FISILIGTILITAVITVVAYI) threads the bilayer. One can recognise a PDZ domain in the interval 124 to 206 (TKSFNEGVSG…TEVTLTVQRG (83 aa)). Residues Ser-329, Asp-340, and Lys-354 each act as charge relay system in the active site.

It belongs to the peptidase S41A family.

The protein localises to the cell membrane. The sequence is that of Probable CtpA-like serine protease from Staphylococcus aureus (strain bovine RF122 / ET3-1).